Reading from the N-terminus, the 905-residue chain is Alanine--tRNA ligase (905 aa).

Residues His-582, His-586, Cys-687, and His-691 each contribute to the Zn(2+) site.

It belongs to the class-II aminoacyl-tRNA synthetase family. It depends on Zn(2+) as a cofactor.

It is found in the cytoplasm. It carries out the reaction tRNA(Ala) + L-alanine + ATP = L-alanyl-tRNA(Ala) + AMP + diphosphate. Functionally, catalyzes the attachment of alanine to tRNA(Ala) in a two-step reaction: alanine is first activated by ATP to form Ala-AMP and then transferred to the acceptor end of tRNA(Ala). Also edits incorrectly charged Ser-tRNA(Ala) and Gly-tRNA(Ala) via its editing domain. This chain is Alanine--tRNA ligase, found in Mycoplasma mobile (strain ATCC 43663 / 163K / NCTC 11711) (Mesomycoplasma mobile).